Here is a 448-residue protein sequence, read N- to C-terminus: Methylenetetrahydrofolate--tRNA-(uracil-5-)-methyltransferase TrmFO (448 aa).

13-18 provides a ligand contact to FAD; it reads GAGLAG.

Belongs to the MnmG family. TrmFO subfamily. It depends on FAD as a cofactor.

It is found in the cytoplasm. It carries out the reaction uridine(54) in tRNA + (6R)-5,10-methylene-5,6,7,8-tetrahydrofolate + NADH + H(+) = 5-methyluridine(54) in tRNA + (6S)-5,6,7,8-tetrahydrofolate + NAD(+). The catalysed reaction is uridine(54) in tRNA + (6R)-5,10-methylene-5,6,7,8-tetrahydrofolate + NADPH + H(+) = 5-methyluridine(54) in tRNA + (6S)-5,6,7,8-tetrahydrofolate + NADP(+). Catalyzes the folate-dependent formation of 5-methyl-uridine at position 54 (M-5-U54) in all tRNAs. This is Methylenetetrahydrofolate--tRNA-(uracil-5-)-methyltransferase TrmFO from Streptococcus pyogenes serotype M28 (strain MGAS6180).